Consider the following 325-residue polypeptide: Helicase VP6-A (325 aa).

2 disordered regions span residues 1-122 and 185-230; these read MLLA…GATG and DLRR…EPAR. Basic and acidic residues-rich tracts occupy residues 8–18, 32–54, 61–79, and 92–105; these read VIKRSSEELKQ, EGGK…KDGE, GQKE…DRRI, and LGER…RGDG. Position 106 (K106) interacts with ATP. Residues 106–122 show a composition bias toward gly residues; the sequence is KVGGGGGDADAGVGATG. 2 stretches are compositionally biased toward basic and acidic residues: residues 185–203 and 211–229; these read DLRR…ERGG and HGDA…EEPA.

The protein belongs to the orbivirus VP6 family. Homohexamer.

The protein resides in the virion. It catalyses the reaction ATP + H2O = ADP + phosphate + H(+). ATP dependent RNA helicase essential for RNA packaging and viral transcription. Possesses ss- and dsRNA-binding capacity. This is Helicase VP6-A (Segment-9) from Bluetongue virus 17 (isolate USA) (BTV 17).